The chain runs to 157 residues: Regenerating islet-derived protein 4 (157 aa).

The signal sequence occupies residues 1–22; that stretch reads MASKGVRLLLLLSWVAGPEVLS. Cys29 and Cys40 form a disulfide bridge. The C-type lectin domain maps to 36 to 154; it reads YRSHCYGYFR…CANRQHFLCK (119 aa). Residues Asn49 and Asn62 are each glycosylated (N-linked (GlcNAc...) asparagine). 2 cysteine pairs are disulfide-bonded: Cys57–Cys153 and Cys128–Cys145. A carbohydrate-binding positions include 97-102 and 134-136; these read DPQKKQ and KDK.

It is found in the secreted. Calcium-independent lectin displaying mannose-binding specificity and able to maintain carbohydrate recognition activity in an acidic environment. May be involved in inflammatory and metaplastic responses of the gastrointestinal epithelium. This is Regenerating islet-derived protein 4 (Reg4) from Mus musculus (Mouse).